The chain runs to 394 residues: tRNA-specific 2-thiouridylase MnmA (394 aa).

ATP is bound by residues 13 to 20 (GLSGGVDS) and Met39. The tract at residues 99 to 101 (NPD) is interaction with target base in tRNA. The active-site Nucleophile is Cys104. Cys104 and Cys202 are disulfide-bonded. Gly128 serves as a coordination point for ATP. The tract at residues 152 to 154 (KDQ) is interaction with tRNA. The active-site Cysteine persulfide intermediate is Cys202. An interaction with tRNA region spans residues 329–330 (RY).

This sequence belongs to the MnmA/TRMU family.

The protein resides in the cytoplasm. The enzyme catalyses S-sulfanyl-L-cysteinyl-[protein] + uridine(34) in tRNA + AH2 + ATP = 2-thiouridine(34) in tRNA + L-cysteinyl-[protein] + A + AMP + diphosphate + H(+). Catalyzes the 2-thiolation of uridine at the wobble position (U34) of tRNA, leading to the formation of s(2)U34. This chain is tRNA-specific 2-thiouridylase MnmA, found in Polaromonas naphthalenivorans (strain CJ2).